A 193-amino-acid chain; its full sequence is Dense granule protein 2 (193 aa).

Residue Asn-4 is glycosylated (N-linked (GlcNAc...) asparagine). A helical membrane pass occupies residues 14–34 (FSPLTVVMLAVTLVAFMGVPL). Asn-74 carries N-linked (GlcNAc...) asparagine glycosylation. The segment at 75 to 140 (SSELAGSRDK…APKPVPVRSA (66 aa)) is disordered. Residues 88–98 (EAEEEAAEVET) show a composition bias toward acidic residues. Residues 153-173 (HRVIGTAVIAAVVAALLWKFS) form a helical membrane-spanning segment. A disordered region spans residues 174 to 193 (RRRSGAPREGGENENGGEEK).

This sequence belongs to the Gra6 family.

Its subcellular location is the membrane. In Neospora caninum (Coccidian parasite), this protein is Dense granule protein 2 (DG2).